Reading from the N-terminus, the 478-residue chain is V-type ATP synthase beta chain (478 aa).

The protein belongs to the ATPase alpha/beta chains family.

In terms of biological role, produces ATP from ADP in the presence of a proton gradient across the membrane. The V-type beta chain is a regulatory subunit. This Thermus thermophilus (strain ATCC BAA-163 / DSM 7039 / HB27) protein is V-type ATP synthase beta chain.